Here is a 375-residue protein sequence, read N- to C-terminus: Queuine tRNA-ribosyltransferase (375 aa).

The Proton acceptor role is filled by D89. Substrate contacts are provided by residues 89-93 (DSGGF), D143, Q187, and G214. The tract at residues 245–251 (GVGKPED) is RNA binding. D264 acts as the Nucleophile in catalysis. Residues 269–273 (TRNAR) form an RNA binding; important for wobble base 34 recognition region. Zn(2+) is bound by residues C302, C304, C307, and H333.

It belongs to the queuine tRNA-ribosyltransferase family. Homodimer. Within each dimer, one monomer is responsible for RNA recognition and catalysis, while the other monomer binds to the replacement base PreQ1. The cofactor is Zn(2+).

The catalysed reaction is 7-aminomethyl-7-carbaguanine + guanosine(34) in tRNA = 7-aminomethyl-7-carbaguanosine(34) in tRNA + guanine. The protein operates within tRNA modification; tRNA-queuosine biosynthesis. Its function is as follows. Catalyzes the base-exchange of a guanine (G) residue with the queuine precursor 7-aminomethyl-7-deazaguanine (PreQ1) at position 34 (anticodon wobble position) in tRNAs with GU(N) anticodons (tRNA-Asp, -Asn, -His and -Tyr). Catalysis occurs through a double-displacement mechanism. The nucleophile active site attacks the C1' of nucleotide 34 to detach the guanine base from the RNA, forming a covalent enzyme-RNA intermediate. The proton acceptor active site deprotonates the incoming PreQ1, allowing a nucleophilic attack on the C1' of the ribose to form the product. After dissociation, two additional enzymatic reactions on the tRNA convert PreQ1 to queuine (Q), resulting in the hypermodified nucleoside queuosine (7-(((4,5-cis-dihydroxy-2-cyclopenten-1-yl)amino)methyl)-7-deazaguanosine). The chain is Queuine tRNA-ribosyltransferase from Escherichia coli O81 (strain ED1a).